We begin with the raw amino-acid sequence, 830 residues long: Prolactin receptor (830 aa).

The signal sequence occupies residues 1 to 23 (MKQKLRSSVQIILLFALTAVGLT). Residues 24–439 (GQSYPGKPKI…QIPTDFRIKD (416 aa)) lie on the Extracellular side of the membrane. Fibronectin type-III domains follow at residues 30–128 (KPKI…VQPD), 129–228 (APVN…IPNG), 231–331 (PPEK…IVQT), and 333–434 (PPVN…IPTD). Residues cysteine 36 and cysteine 46 are joined by a disulfide bond. N-linked (GlcNAc...) asparagine glycosylation is present at asparagine 59. A disulfide bridge connects residues cysteine 75 and cysteine 86. 8 N-linked (GlcNAc...) asparagine glycosylation sites follow: asparagine 91, asparagine 100, asparagine 112, asparagine 132, asparagine 263, asparagine 304, asparagine 316, and asparagine 336. Aspartate 415 and histidine 417 together coordinate Zn(2+). Residues 420–424 (WSEWS) carry the WSXWS motif motif. Residues 440-460 (MVVWIIVGVLSSLICLVMSWT) traverse the membrane as a helical segment. Residues 461–830 (MVLKGYRMIA…DPSSFIPAFK (370 aa)) are Cytoplasmic-facing. The Box 1 motif motif lies at 472-480 (ILPPVPGPK).

It belongs to the type I cytokine receptor family. Type 1 subfamily.

The protein resides in the membrane. Its function is as follows. This is a receptor for the anterior pituitary hormone prolactin. The sequence is that of Prolactin receptor (PRLR) from Columba livia (Rock dove).